Consider the following 262-residue polypeptide: Tethering factor for nuclear proteasome cut8 (262 aa).

Belongs to the cut8/STS1 family. In terms of assembly, binds the proteasome. In terms of processing, the N-terminal part (residues 1 to 72) is polyubiquitinated by rhp6, which is required for the interaction with the proteasome.

The protein resides in the nucleus envelope. Its function is as follows. Together with nucleoporin alm1, tethers the proteasome to the nuclear envelope. Involved in ubiquitin-mediated protein degradation and facilitates the degradation of nuclear proteins like mitotic cyclin and cut2. Required for normal progression of anaphase. The chain is Tethering factor for nuclear proteasome cut8 from Schizosaccharomyces pombe (strain 972 / ATCC 24843) (Fission yeast).